The chain runs to 218 residues: MVTKSKRPKSGDRSGREPGNAGPIEQGDYLDGQLLIAMPVMEDERFARSVIYICAHSSEGAMGIIVNRPAGSIDFPELLVQLDIVEKPEQIKLPDHAESMKVLRGGPVETGRGFVLHSSDFFIKDATLPIDDGISLTATVDILRAIASGAGPKHAILALGYAGWAPGQLETEIQDNGWLHCDADADLVFGNDIEEKYDRALHKLGIEPGMLSAEAGHA.

The tract at residues M1–Q26 is disordered.

The protein belongs to the UPF0301 (AlgH) family.

The chain is UPF0301 protein RPB_4502 from Rhodopseudomonas palustris (strain HaA2).